A 331-amino-acid polypeptide reads, in one-letter code: D/L-glyceraldehyde reductase (331 aa).

Tyrosine 51 (proton donor) is an active-site residue. Histidine 114 is a binding site for substrate. 213–276 (SAFGNNTKGL…SVTKARIAEN (64 aa)) lines the NADP(+) pocket.

Belongs to the aldo/keto reductase family.

It catalyses the reaction glycerol + NADP(+) = L-glyceraldehyde + NADPH + H(+). The catalysed reaction is glycerol + NADP(+) = D-glyceraldehyde + NADPH + H(+). Its pathway is carbohydrate acid metabolism. Its function is as follows. Mediates the conversion of L-glyceraldehyde to glycerol in D-galacturonate catabolic process. Also able to reduce D-glyceraldehyde. This chain is D/L-glyceraldehyde reductase (gld1), found in Hypocrea jecorina (Trichoderma reesei).